The chain runs to 1940 residues: MATDADMAIFGEAAPYLRKSEKERIEAQNKPFDAKSSVFVVHAKESYVKSTIQSKESGKVTVKTEGGETLTVKEDQIFSMNPPKYDKIEDMAMMTHLHEPAVLYNLKERYAAWMIYTYSGLFCVTVNPYKWLPVYNPEVVLAYRGKKRQEAPPHIFSISDNAYQFMLTDRENQSILITGESGAGKTVNTKRVIQYFATIAASGDKKKEEQPAGKMQGTLEDQIISANPLLEAFGNAKTVRNDNSSRFGKFIRIHFGATGKLASADIETYLLEKSRVTFQLKAERSYHIFYQIMSNKKPELIEMLLITTNPYDYQYVSQGEITVPSINDQEELMATDSAIDILGFTPDEKTAIYKLTGAVMHYGNLKFKQKQREEQAEPGGTEVADKAAYLMGLNSADLLKALCYPRVKVGNEYVTKGQTVQQVYNSVGALAKSVFEKMFLWMVVRINQQLDTKQPRQYFIGVLDIAGFEIFDFNSLEQLCINFTNEKLQQFFNHHMFVLEQEEYKKEGIEWEFIDFGMDLAACIELIEKPMGIFSILEEECMFPKATDTSFKNKLYDQHLGKSNNFQKPKPGKGKAEAHFSLVHYAGTVDYNITGWLEKNKDPLNETVVGLYQKSSLKTLALLFASVGGAEAESGAGGKKGGKKKGSSFQTVSALFRENLNKLMSNLRSTHPHFVRCLIPNETKTPGAMEHELVLHQLRCNGVLEGIRICRKGFPIRILYADFKQRYKVLNASAIPEGQFIDSKKASEKLLGSIDVDHTQYKFGHTKVFFKAGLLGLLEEMRDEKLAQLITRTQARCRGFLMRVEFKKMMERRESIFCIQYNVRAFMNVKHWPWMKLFFKIKPLLKSAESEKEMANMKEEFEKTKEELAKSEAKRKELEEKMVSLLQEKNDLQLQVQAEADGLADAEERCDQLIKTKIQLEAKIKELTERAEDEEEMNAELTAKKRKLEDECSELKKDIDDLELTLAKVEKEKHATENKVKNLTEEMAALDETIAKLTKEKKALQEAHQQTLDDLQAEEDKVNTLTKAKTKLEQQVDDLEGSLEQEKKLRMDLERAKRKLEGDLKMTQESTMDLENDKQQLDEKLKKKDFEISQIQSKIEDEQALGMQLQKKIKELQARIEELEEEIEAERTSRAKAEKHRADLSRELEEISERLEEAGGATAAQIDMNKKREAEFQKMRRDLEEATLQHEATAAALRKKHADSTADVGEQIDNLQRVKQKLEKEKSELKMEIDDLASNMESVSKAKANLEKMCRSLEDQLSEIKTKEEEQQRTINDISAQKARLQTESGEYSRQVEEKDALISQLSRGKQAFTQQIEELKRHLEEEIKAKKCPAHALQSARHDCDLLREQYEEEQEAKGELQRALSKANSEVAQWRTKYETDAIQRTEELEEAKKKLAQRLQDAEEHVEAVNSKCASLEKTKQRLQNEVEDLMIDVERSNAACAALDKKQKNFDKILSEWKQKYEETQAELEASQKESRSLSTELFKMKNAYEESLDHLETLKRENKNLQQEISDLTEQIAEGGKAIHELEKVKKQIEQEKSELQTALEEAEASLEHEEGKILRVQLELNQVKSDIDRKIAEKDEEIDQLKRNHLRVVDSMQSTLDAEIRSRNEALRLKKKMEGDLNEIEIQLSHANRQAAEAQKNLRNTQGVLKDTQIHLDDALRSQEDLKEQVAMVERRANLLQAEIEELRAALEQTERSRKVAEQELLDASERVQLLHTQNTSLINTKKKLESDISQIQSEMEDTIQEARNAEEKAKKAITDAAMMAEELKKEQDTSAHLERMKKNLDQTVKDLQHRLDEAEQLALKGGKKQIQKLEARVRELEGEVDAEQKRSAEAVKGVRKYERRVKELTYQSEEDRKNVLRLQDLVDKLQMKVKSYKRQAEEAEELSNVNLSKFRKIQHELEEAEERADIAESQVNKLRAKSREIGKKAESEE.

A Myosin N-terminal SH3-like domain is found at 33 to 82; the sequence is DAKSSVFVVHAKESYVKSTIQSKESGKVTVKTEGGETLTVKEDQIFSMNP. Residues 86 to 783 enclose the Myosin motor domain; that stretch reads DKIEDMAMMT…LLGLLEEMRD (698 aa). At Lys-130 the chain carries N6,N6,N6-trimethyllysine. 179–186 is a binding site for ATP; it reads GESGAGKT. Actin-binding stretches follow at residues 660–682 and 762–776; these read LNKL…IPNE and KFGH…GLLG. Residues 786–815 enclose the IQ domain; sequence LAQLITRTQARCRGFLMRVEFKKMMERRES. Residues 844–1940 are a coiled coil; the sequence is LLKSAESEKE…EIGKKAESEE (1097 aa). The disordered stretch occupies residues 1912 to 1940; sequence EERADIAESQVNKLRAKSREIGKKAESEE. Residues 1928–1940 show a composition bias toward basic and acidic residues; it reads KSREIGKKAESEE.

Belongs to the TRAFAC class myosin-kinesin ATPase superfamily. Myosin family. As to quaternary structure, muscle myosin is a hexameric protein that consists of 2 heavy chain subunits (MHC), 2 alkali light chain subunits (MLC) and 2 regulatory light chain subunits (MLC-2).

It localises to the cytoplasm. Its subcellular location is the myofibril. Muscle contraction. The protein is Myosin-1B (MYH1B) of Gallus gallus (Chicken).